We begin with the raw amino-acid sequence, 230 residues long: UPF0173 metal-dependent hydrolase SPO2976 (230 aa).

The protein belongs to the UPF0173 family.

The sequence is that of UPF0173 metal-dependent hydrolase SPO2976 from Ruegeria pomeroyi (strain ATCC 700808 / DSM 15171 / DSS-3) (Silicibacter pomeroyi).